The sequence spans 185 residues: Threonylcarbamoyl-AMP synthase (185 aa).

Positions 1–185 (MKNLNQVVDA…AKTGNTLRQG (185 aa)) constitute a YrdC-like domain.

This sequence belongs to the SUA5 family. TsaC subfamily.

Its subcellular location is the cytoplasm. The catalysed reaction is L-threonine + hydrogencarbonate + ATP = L-threonylcarbamoyladenylate + diphosphate + H2O. Functionally, required for the formation of a threonylcarbamoyl group on adenosine at position 37 (t(6)A37) in tRNAs that read codons beginning with adenine. Catalyzes the conversion of L-threonine, HCO(3)(-)/CO(2) and ATP to give threonylcarbamoyl-AMP (TC-AMP) as the acyladenylate intermediate, with the release of diphosphate. This chain is Threonylcarbamoyl-AMP synthase, found in Aliivibrio fischeri (strain ATCC 700601 / ES114) (Vibrio fischeri).